A 308-amino-acid polypeptide reads, in one-letter code: Probable acetylxylan esterase A (308 aa).

Residues 1-19 form the signal peptide; the sequence is MAPFSFLLTLLLYTLSAGA. N141 carries N-linked (GlcNAc...) asparagine glycosylation. Residue S151 is the Charge relay system of the active site. N193 carries an N-linked (GlcNAc...) asparagine glycan.

It belongs to the carbohydrate esterase 1 (CE1) family. AxeA subfamily. In terms of assembly, monomer.

The protein resides in the secreted. The catalysed reaction is Deacetylation of xylans and xylo-oligosaccharides.. The protein operates within glycan degradation; xylan degradation. Its function is as follows. Acetylxylan esterase involved in the hydrolysis of xylan, a major structural heterogeneous polysaccharide found in plant biomass representing the second most abundant polysaccharide in the biosphere, after cellulose. Degrades acetylated xylans by cleaving acetyl side groups from the hetero-xylan backbone. The polypeptide is Probable acetylxylan esterase A (axeA) (Aspergillus clavatus (strain ATCC 1007 / CBS 513.65 / DSM 816 / NCTC 3887 / NRRL 1 / QM 1276 / 107)).